Consider the following 335-residue polypeptide: Fructose-1,6-bisphosphatase class 1 (335 aa).

4 residues coordinate Mg(2+): Glu91, Asp113, Leu115, and Asp116. Residues 116–119, Asn208, and Lys274 each bind substrate; that span reads DGSS. Mg(2+) is bound at residue Glu280.

Belongs to the FBPase class 1 family. In terms of assembly, homotetramer. Mg(2+) serves as cofactor.

Its subcellular location is the cytoplasm. It carries out the reaction beta-D-fructose 1,6-bisphosphate + H2O = beta-D-fructose 6-phosphate + phosphate. Its pathway is carbohydrate biosynthesis; gluconeogenesis. This chain is Fructose-1,6-bisphosphatase class 1, found in Chromobacterium violaceum (strain ATCC 12472 / DSM 30191 / JCM 1249 / CCUG 213 / NBRC 12614 / NCIMB 9131 / NCTC 9757 / MK).